The following is an 89-amino-acid chain: Pigment dispersing factor homolog pdf-2 (89 aa).

Residues Met1–Ala27 form the signal peptide.

In terms of biological role, probable ligand of isoforms a and b of the calcitonin receptor-like protein, pdfr-1, a G-protein coupled receptor. May not signal through isoform c of pdfr-1. Involved in locomotion; may play a role in circadian rhythms of locomotor activity. Modulator of egg-laying. This chain is Pigment dispersing factor homolog pdf-2, found in Caenorhabditis elegans.